The primary structure comprises 321 residues: NADPH-dependent codeinone reductase 1-1 (321 aa).

2 residues coordinate NADPH: Thr-27 and Asp-51. Active-site proton donor residues include Tyr-56 and His-119. A substrate-binding site is contributed by His-119. Residues Gln-187, Ser-214, Leu-216, Ser-264, and Arg-269 each coordinate NADPH.

This sequence belongs to the aldo/keto reductase family. Latex secreting cells (laticifer cells). Expressed constitutively and ubiquitously with highest levels in capsules. Restricted to the parietal region of sieve elements adjacent or proximal to laticifers in roots, stems, leaves and carpels.

The protein localises to the cytoplasm. Its subcellular location is the cytosol. The catalysed reaction is codeine + NADP(+) = codeinone + NADPH + H(+). It carries out the reaction neopine + NADP(+) = neopinone + NADPH + H(+). The enzyme catalyses morphine + NADP(+) = morphinone + NADPH + H(+). It catalyses the reaction neomorphine + NADP(+) = neomorphinone + NADPH + H(+). The protein operates within alkaloid biosynthesis; morphine biosynthesis. Functionally, NADPH-dependent reductase involved in biosynthesis of morphinan-type benzylisoquinoline and opiate alkaloids natural products. Reduces codeinone to codeine in the penultimate step in morphine biosynthesis. Can use morphinone, hydrocodone and hydromorphone as substrate during reductive reaction with NADPH as cofactor, and morphine and dihydrocodeine as substrate during oxidative reaction with NADP as cofactor. Converts morphinone to morphine, and neomorphinone to neomorphine. Reduces irreversibly neopinone, a spontaneous isomer of codeinone, to neopine; in planta, neopine levels are limited to low levels. The polypeptide is NADPH-dependent codeinone reductase 1-1 (Papaver somniferum (Opium poppy)).